Reading from the N-terminus, the 397-residue chain is Succinyl-diaminopimelate desuccinylase (397 aa).

A Zn(2+)-binding site is contributed by histidine 73. Aspartate 75 is an active-site residue. Residue aspartate 106 coordinates Zn(2+). Glutamate 140 serves as the catalytic Proton acceptor. Residues glutamate 141, glutamate 169, and histidine 366 each contribute to the Zn(2+) site.

The protein belongs to the peptidase M20A family. DapE subfamily. Homodimer. Zn(2+) serves as cofactor. Co(2+) is required as a cofactor.

The enzyme catalyses N-succinyl-(2S,6S)-2,6-diaminopimelate + H2O = (2S,6S)-2,6-diaminopimelate + succinate. It participates in amino-acid biosynthesis; L-lysine biosynthesis via DAP pathway; LL-2,6-diaminopimelate from (S)-tetrahydrodipicolinate (succinylase route): step 3/3. Functionally, catalyzes the hydrolysis of N-succinyl-L,L-diaminopimelic acid (SDAP), forming succinate and LL-2,6-diaminopimelate (DAP), an intermediate involved in the bacterial biosynthesis of lysine and meso-diaminopimelic acid, an essential component of bacterial cell walls. In Sinorhizobium medicae (strain WSM419) (Ensifer medicae), this protein is Succinyl-diaminopimelate desuccinylase.